Reading from the N-terminus, the 245-residue chain is 8-amino-3,8-dideoxy-manno-octulosonate cytidylyltransferase (245 aa).

The protein belongs to the KdsB family.

The protein resides in the cytoplasm. The catalysed reaction is 8-amino-3,8-dideoxy-alpha-D-manno-octulosonate + CTP = CMP-8-amino-3,8-dideoxy-alpha-D-manno-oct-2-ulosonate + diphosphate. It participates in bacterial outer membrane biogenesis; lipopolysaccharide biosynthesis. Functionally, activates KDO8N (a required 8-carbon sugar) for incorporation into bacterial lipopolysaccharide in the Shewanella genus. The protein is 8-amino-3,8-dideoxy-manno-octulosonate cytidylyltransferase of Shewanella baltica (strain OS223).